The sequence spans 29 residues: TIIGAPCRKCEHLDRSGNCVRDWSCGQEV.

The O-linked (GlcNAc...) threonine glycan is linked to Thr1. Disulfide bonds link Cys7–Cys19 and Cys10–Cys25.

This sequence belongs to the sea anemone BBH family.

The protein localises to the secreted. Its subcellular location is the nematocyst. The chain is U-homostoxin-Hdu1a from Homostichanthus duerdeni (Sea anemone).